The primary structure comprises 141 residues: Sec-independent protein translocase protein TatB (141 aa).

Residues Phe2–Gly22 traverse the membrane as a helical segment. Residues Ile92 to Thr141 form a disordered region. Over residues Pro117–Thr141 the composition is skewed to low complexity.

The protein belongs to the TatB family. In terms of assembly, the Tat system comprises two distinct complexes: a TatABC complex, containing multiple copies of TatA, TatB and TatC subunits, and a separate TatA complex, containing only TatA subunits. Substrates initially bind to the TatABC complex, which probably triggers association of the separate TatA complex to form the active translocon.

It is found in the cell membrane. In terms of biological role, part of the twin-arginine translocation (Tat) system that transports large folded proteins containing a characteristic twin-arginine motif in their signal peptide across membranes. Together with TatC, TatB is part of a receptor directly interacting with Tat signal peptides. TatB may form an oligomeric binding site that transiently accommodates folded Tat precursor proteins before their translocation. The polypeptide is Sec-independent protein translocase protein TatB (Mycolicibacterium gilvum (strain PYR-GCK) (Mycobacterium gilvum (strain PYR-GCK))).